The chain runs to 226 residues: Ribose-5-phosphate isomerase A (226 aa).

Substrate contacts are provided by residues 26–29 (TGST), 82–85 (DGAD), and 95–98 (KGGG). Residue Glu-104 is the Proton acceptor of the active site. Residue Lys-122 participates in substrate binding.

This sequence belongs to the ribose 5-phosphate isomerase family. Homodimer.

It carries out the reaction aldehydo-D-ribose 5-phosphate = D-ribulose 5-phosphate. It participates in carbohydrate degradation; pentose phosphate pathway; D-ribose 5-phosphate from D-ribulose 5-phosphate (non-oxidative stage): step 1/1. In terms of biological role, catalyzes the reversible conversion of ribose-5-phosphate to ribulose 5-phosphate. This chain is Ribose-5-phosphate isomerase A, found in Streptococcus thermophilus (strain ATCC BAA-250 / LMG 18311).